The primary structure comprises 88 residues: Large ribosomal subunit protein bL27 (88 aa).

The span at 1–13 shows a compositional bias: polar residues; it reads MATKKGASSSSNG. A disordered region spans residues 1–23; the sequence is MATKKGASSSSNGRDSEAKRLGV.

It belongs to the bacterial ribosomal protein bL27 family.

The chain is Large ribosomal subunit protein bL27 from Corynebacterium urealyticum (strain ATCC 43042 / DSM 7109).